We begin with the raw amino-acid sequence, 347 residues long: NADH-ubiquinone oxidoreductase chain 2 (347 aa).

Helical transmembrane passes span 4–21, 26–45, 59–79, 96–116, 122–142, 148–168, 201–221, 242–262, 274–294, and 326–346; these read LILS…LIVM, WLMV…PVLM, YFLT…INLI, IIMT…FWVP, IQLS…MSIL, AINM…GGWG, ALLN…TFML, TTIL…GFLP, DSII…YFYM, and LPPL…LMLL.

The protein belongs to the complex I subunit 2 family. Core subunit of respiratory chain NADH dehydrogenase (Complex I) which is composed of 45 different subunits. Interacts with TMEM242.

The protein resides in the mitochondrion inner membrane. The enzyme catalyses a ubiquinone + NADH + 5 H(+)(in) = a ubiquinol + NAD(+) + 4 H(+)(out). Its function is as follows. Core subunit of the mitochondrial membrane respiratory chain NADH dehydrogenase (Complex I) which catalyzes electron transfer from NADH through the respiratory chain, using ubiquinone as an electron acceptor. Essential for the catalytic activity and assembly of complex I. The sequence is that of NADH-ubiquinone oxidoreductase chain 2 from Syconycteris australis (Southern blossom bat).